Reading from the N-terminus, the 182-residue chain is Cbp/p300-interacting transactivator 4 (182 aa).

The segment at 22 to 129 (GPHAPRTLQP…PPPPPPALGC (108 aa)) is disordered. Residues 64–89 (SPVSFQPFPVSQSPGAGSTHLQSAAT) show a composition bias toward polar residues. The span at 100 to 117 (AAAGGPSPLQPAPGAAAS) shows a compositional bias: low complexity.

It belongs to the CITED family. In terms of assembly, interacts via its C-terminal region with the CH1 domain of CREBBP and EP300. Interacts with all TFAP2/AP-2 isoforms. In terms of tissue distribution, strongly expressed in heart, spleen and testis, and weakly in liver and kidney.

Its subcellular location is the nucleus. The protein localises to the cytoplasm. Acts as a transcriptional coactivator for TFAP2/AP-2. Enhances estrogen-dependent transactivation mediated by estrogen receptors. May function as an inhibitor of transactivation by HIF1A by disrupting HIF1A interaction with CREBBP. May be involved in regulation of gene expression during development and differentiation of blood cells, endothelial cells and mammary epithelial cells. The sequence is that of Cbp/p300-interacting transactivator 4 from Mus musculus (Mouse).